The sequence spans 461 residues: Ribulose bisphosphate carboxylase (461 aa).

Substrate is bound at residue asparagine 112. Catalysis depends on lysine 167, which acts as the Proton acceptor. Lysine 169 is a substrate binding site. 3 residues coordinate Mg(2+): lysine 192, aspartate 194, and glutamate 195. An N6-carboxylysine modification is found at lysine 192. The Proton acceptor role is filled by histidine 288. Residues arginine 289, histidine 322, and serine 369 each contribute to the substrate site.

Belongs to the RuBisCO large chain family. Type II subfamily. As to quaternary structure, homodimer. Mg(2+) is required as a cofactor.

The enzyme catalyses 2 (2R)-3-phosphoglycerate + 2 H(+) = D-ribulose 1,5-bisphosphate + CO2 + H2O. It carries out the reaction D-ribulose 1,5-bisphosphate + O2 = 2-phosphoglycolate + (2R)-3-phosphoglycerate + 2 H(+). Functionally, ruBisCO catalyzes two reactions: the carboxylation of D-ribulose 1,5-bisphosphate, the primary event in carbon dioxide fixation, as well as the oxidative fragmentation of the pentose substrate. Both reactions occur simultaneously and in competition at the same active site. This is Ribulose bisphosphate carboxylase from Rhodopseudomonas palustris (strain HaA2).